Reading from the N-terminus, the 418-residue chain is Putative ion-transport protein YfeO (418 aa).

Helical transmembrane passes span 10–30, 54–74, 99–119, 120–140, 149–169, 186–206, 223–243, 258–278, 300–320, 322–342, 343–363, and 386–406; these read LLLS…LIVV, DSPF…GLVI, ALPG…SLGP, EHPI…RLLP, ILAS…AALI, LFAP…FFHP, ILSG…AVWC, VLML…AGPV, DYFL…ASGF, GGRI…LHEH, VPAV…VLVV, and LLCI…IMMV.

Belongs to the chloride channel (TC 2.A.49) family.

It localises to the cell membrane. This chain is Putative ion-transport protein YfeO, found in Escherichia fergusonii (strain ATCC 35469 / DSM 13698 / CCUG 18766 / IAM 14443 / JCM 21226 / LMG 7866 / NBRC 102419 / NCTC 12128 / CDC 0568-73).